We begin with the raw amino-acid sequence, 375 residues long: MADKQTVVVDNGSGVVKAGFSGEDAPRAVFPSIIGRPKNVSALIGVDSASEYIGDEAQQKRGVLKIFYPIEHGIIKDWEDMEKIWNHTFYVELRVQPDEHPVLLTEAPLNPKTNREKMTQIMFETFNVPALYVAIQAVLSLYSAGRTTGIVCDAGDGVTHTVPIYEGFSIPHAVSRIQLAGRDLTTFMAKLLTEKGYVFTSSAEMEIVRDIKEKLCFVALDYEAAMKQSYESTTFEKNYELPDGRVITIGNARFRCPEYLFKPLEMNGKELDSIQSLTYNSIQECDVDVRRDLYQNIILSGGTTMYEGIGERLLKEIEARAPKSINVKVIASPDRRFAVWRGGSTLTSLSTFASMWITKEDYDENGASIVHRKCL.

Belongs to the actin family.

Its subcellular location is the cytoplasm. It localises to the cytoskeleton. It catalyses the reaction ATP + H2O = ADP + phosphate + H(+). Functionally, actins are highly conserved proteins that are involved in various types of cell motility and are ubiquitously expressed in all eukaryotic cells. In Sterkiella nova (Ciliate), this protein is Actin, cytoplasmic (MIC-ACT-1).